A 449-amino-acid chain; its full sequence is Exodeoxyribonuclease 7 large subunit (449 aa).

It belongs to the XseA family. As to quaternary structure, heterooligomer composed of large and small subunits.

It localises to the cytoplasm. It catalyses the reaction Exonucleolytic cleavage in either 5'- to 3'- or 3'- to 5'-direction to yield nucleoside 5'-phosphates.. In terms of biological role, bidirectionally degrades single-stranded DNA into large acid-insoluble oligonucleotides, which are then degraded further into small acid-soluble oligonucleotides. In Salmonella typhi, this protein is Exodeoxyribonuclease 7 large subunit.